The chain runs to 2104 residues: Phenolphthiocerol synthesis polyketide synthase type I Pks15/1 (2104 aa).

In terms of domain architecture, Ketosynthase family 3 (KS3) spans 41–464 (TEPVAVVGIG…GTNAHVILEE (424 aa)). Catalysis depends on for beta-ketoacyl synthase activity residues Cys-211, His-346, and His-386. The interval 571 to 887 (TAVVFPGQGS…GQLFSTGMSV (317 aa)) is acyltransferase. Ser-662 functions as the For acyltransferase activity in the catalytic mechanism. The N-terminal hotdog fold stretch occupies residues 935–1057 (HALLGAVVER…GMLGVEAASS (123 aa)). A dehydratase region spans residues 935-1095 (HALLGAVVER…YAYGPGFQGL (161 aa)). The 273-residue stretch at 935 to 1207 (HALLGAVVER…TRAMSAAQLR (273 aa)) folds into the PKS/mFAS DH domain. Catalysis depends on His-967, which acts as the Proton acceptor; for dehydratase activity. Residues 1069-1207 (AESVDISDGY…TRAMSAAQLR (139 aa)) are C-terminal hotdog fold. Asp-1128 functions as the Proton donor; for dehydratase activity in the catalytic mechanism. The enoylreductase stretch occupies residues 1400–1705 (GTLEDLVIEP…QARHIGKVVL (306 aa)). NADP(+)-binding positions include 1530–1547 (VLIH…VQLA) and 1719–1734 (TVLI…AVLA). A beta-ketoacyl reductase (KR) region spans residues 1718–1899 (ATVLITGATG…SVAWGLWEQS (182 aa)). One can recognise a Carrier domain in the interval 2004 to 2079 (DALVGLVCLQ…AIAEYVGRQI (76 aa)). Position 2039 is an O-(pantetheine 4'-phosphoryl)serine (Ser-2039). The interval 2081-2104 (DSQATQAEEEKLPESDGEMVSVTA) is disordered.

Belongs to the thiolase-like superfamily. Beta-ketoacyl-ACP synthases family. Requires pantetheine 4'-phosphate as cofactor.

It catalyses the reaction a fatty acyl-[ACP] + malonyl-[ACP] + H(+) = a 3-oxoacyl-[ACP] + holo-[ACP] + CO2. The protein operates within lipid metabolism; fatty acid biosynthesis. Its function is as follows. Catalyzes the elongation by iterative transfer of p-hydroxybenzoyl group from FadD22 (pHBA-S-FAdD22) to form p-hydroxyphenylalkanoate (pHPA) intermediates during phenolphthiocerol (PPOL) biosynthesis. PPOL is an important intermediate in the biosynthesis of phenolic glycolipid (mycosid B). The polypeptide is Phenolphthiocerol synthesis polyketide synthase type I Pks15/1 (pks15/1) (Mycobacterium marinum (strain ATCC BAA-535 / M)).